The following is a 202-amino-acid chain: Hydrogenase expression/formation protein HupD (202 aa).

Ni(2+)-binding residues include Glu-28, Asp-74, and His-105.

It belongs to the peptidase A31 family.

Not known. Could be involved in the processing of hydrogenase. The chain is Hydrogenase expression/formation protein HupD (hupD) from Rhizobium leguminosarum bv. viciae.